The following is a 574-amino-acid chain: Ribonuclease Y (574 aa).

Residues 1–21 traverse the membrane as a helical segment; sequence MSLLDLVLLLLVLGLGGVLLL. Positions 264-327 constitute a KH domain; it reads AVTVVPIPSD…EIARMALEEL (64 aa). The 94-residue stretch at 390–483 folds into the HD domain; sequence VLKHSIQVAH…VAAADALSAA (94 aa).

It belongs to the RNase Y family.

It localises to the cell membrane. Endoribonuclease that initiates mRNA decay. This is Ribonuclease Y from Thermus thermophilus (strain ATCC 27634 / DSM 579 / HB8).